Reading from the N-terminus, the 90-residue chain is NAD(P)H-quinone oxidoreductase subunit H, chloroplastic (90 aa).

It belongs to the complex I 49 kDa subunit family. As to quaternary structure, NDH is composed of at least 16 different subunits, 5 of which are encoded in the nucleus.

Its subcellular location is the plastid. It localises to the chloroplast thylakoid membrane. It catalyses the reaction a plastoquinone + NADH + (n+1) H(+)(in) = a plastoquinol + NAD(+) + n H(+)(out). The catalysed reaction is a plastoquinone + NADPH + (n+1) H(+)(in) = a plastoquinol + NADP(+) + n H(+)(out). Functionally, NDH shuttles electrons from NAD(P)H:plastoquinone, via FMN and iron-sulfur (Fe-S) centers, to quinones in the photosynthetic chain and possibly in a chloroplast respiratory chain. The immediate electron acceptor for the enzyme in this species is believed to be plastoquinone. Couples the redox reaction to proton translocation, and thus conserves the redox energy in a proton gradient. In Secale cereale (Rye), this protein is NAD(P)H-quinone oxidoreductase subunit H, chloroplastic (ndhH).